Consider the following 632-residue polypeptide: MSSQEASKMLRTYNIAWWGNNYYDVNELGHISVCPDPDVPEARVDLAKLVKAREAQGQRLPALFCFPQILQHRLRSINAAFKRARESYGYNGDYFLVYPIKVNQHRRVIESLIHSGEPLGLEAGSKAELMAVLAHAGMTRSVIVCNGYKDREYIRLALIGEKMGHKVYLVIEKMSEIAIVLEEAERLNVVPRLGVRARLASQGSGKWQSSGGEKSKFGLAATQVLQLVETLRDAGRLDSLQLLHFHLGSQMANIRDIATGVRESARFYVELHKLGVNIQCFDVGGGLGVDYEGTRSQSDCSVNYGLNEYANNIIWAIGDACEEHGLPHPTVITESGRAVTAHHTVLVSNIIGVERNEYTDPTAPAEDAPRALQNLWETWQEMHKPGTRRSLREWLHDSQMDLHDIHIGYSSGAFSLQERAWAEQLYLSMCHEVQKQLDPQNRAHRPIIDELQERMADKMYVNFSLFQSMPDAWGIDQLFPVLPLEGLDQVPERRAVLLDITCDSDGAIDHYIDGDGIATTMPMPEYDPENPPMLGFFMVGAYQEILGNMHNLFGDTEAVDVFVFPDGSVEVELSDEGDTVADMLQYVQLDPKTLLTHFRDQVKQTDLDDALQQQFLEEFEAGLYGYTYLEDE.

Position 101 is an N6-(pyridoxal phosphate)lysine (lysine 101). 281–291 provides a ligand contact to substrate; the sequence is FDVGGGLGVDY.

Belongs to the Orn/Lys/Arg decarboxylase class-II family. SpeA subfamily. Mg(2+) is required as a cofactor. The cofactor is pyridoxal 5'-phosphate.

The catalysed reaction is L-arginine + H(+) = agmatine + CO2. It participates in amine and polyamine biosynthesis; agmatine biosynthesis; agmatine from L-arginine: step 1/1. Catalyzes the biosynthesis of agmatine from arginine. The chain is Biosynthetic arginine decarboxylase from Salmonella agona (strain SL483).